We begin with the raw amino-acid sequence, 182 residues long: Cbp/p300-interacting transactivator 4 (182 aa).

Positions 22–129 are disordered; that stretch reads GPHAPRTLQP…PPPPPPALGC (108 aa). Residues 64-89 show a composition bias toward polar residues; sequence SPVSFQPFPVSQSPGAGSTHLQSAAT. A compositionally biased stretch (low complexity) spans 100–117; that stretch reads AAAGGPSPLQPAPGAAAS.

The protein belongs to the CITED family. Interacts via its C-terminal region with the CH1 domain of CREBBP and EP300. Interacts with all TFAP2/AP-2 isoforms. As to expression, strongly expressed in heart, spleen and testis, and weakly in liver and kidney.

It localises to the nucleus. The protein resides in the cytoplasm. Acts as a transcriptional coactivator for TFAP2/AP-2. Enhances estrogen-dependent transactivation mediated by estrogen receptors. May function as an inhibitor of transactivation by HIF1A by disrupting HIF1A interaction with CREBBP. May be involved in regulation of gene expression during development and differentiation of blood cells, endothelial cells and mammary epithelial cells. The sequence is that of Cbp/p300-interacting transactivator 4 from Mus musculus (Mouse).